The sequence spans 79 residues: Acyl carrier protein (79 aa).

One can recognise a Carrier domain in the interval 2-77; that stretch reads SDIEARVKKI…NAVDYATKNQ (76 aa). At S37 the chain carries O-(pantetheine 4'-phosphoryl)serine.

It belongs to the acyl carrier protein (ACP) family. 4'-phosphopantetheine is transferred from CoA to a specific serine of apo-ACP by AcpS. This modification is essential for activity because fatty acids are bound in thioester linkage to the sulfhydryl of the prosthetic group.

The protein localises to the cytoplasm. Its pathway is lipid metabolism; fatty acid biosynthesis. Carrier of the growing fatty acid chain in fatty acid biosynthesis. This Variovorax paradoxus (strain S110) protein is Acyl carrier protein.